Consider the following 451-residue polypeptide: Eukaryotic translation initiation factor 3 subunit E (451 aa).

Residues 256 to 425 enclose the PCI domain; the sequence is TDLFFSPAYI…GTVIMNHPPQ (170 aa).

The protein belongs to the eIF-3 subunit E family. In terms of assembly, component of the eukaryotic translation initiation factor 3 (eIF-3) complex.

Its subcellular location is the cytoplasm. Its function is as follows. Component of the eukaryotic translation initiation factor 3 (eIF-3) complex, which is involved in protein synthesis of a specialized repertoire of mRNAs and, together with other initiation factors, stimulates binding of mRNA and methionyl-tRNAi to the 40S ribosome. The eIF-3 complex specifically targets and initiates translation of a subset of mRNAs involved in cell proliferation. This Aspergillus oryzae (strain ATCC 42149 / RIB 40) (Yellow koji mold) protein is Eukaryotic translation initiation factor 3 subunit E (int6).